Reading from the N-terminus, the 122-residue chain is Large ribosomal subunit protein uL14 (122 aa).

The protein belongs to the universal ribosomal protein uL14 family. Part of the 50S ribosomal subunit. Forms a cluster with proteins L3 and L19. In the 70S ribosome, L14 and L19 interact and together make contacts with the 16S rRNA in bridges B5 and B8.

Binds to 23S rRNA. Forms part of two intersubunit bridges in the 70S ribosome. In Clostridium botulinum (strain Alaska E43 / Type E3), this protein is Large ribosomal subunit protein uL14.